The following is a 348-amino-acid chain: ATPase GET3 (348 aa).

Residue 26–33 (KGGVGKTT) participates in ATP binding. Residue Asp57 is part of the active site. Residues Glu241 and Asn268 each contribute to the ATP site. Residues Cys280 and Cys283 each coordinate Zn(2+). 310-312 (PLL) contributes to the ATP binding site.

Belongs to the arsA ATPase family. Homodimer. Component of the Golgi to ER traffic (GET) complex, which is composed of GET1, GET2 and GET3. Within the complex, GET1 and GET2 form a heterotetramer which is stabilized by phosphatidylinositol binding and which binds to the GET3 homodimer. Interacts with the chloride channel protein GEF1.

It is found in the cytoplasm. The protein localises to the endoplasmic reticulum. Its subcellular location is the golgi apparatus. Functionally, ATPase required for the post-translational delivery of tail-anchored (TA) proteins to the endoplasmic reticulum. Recognizes and selectively binds the transmembrane domain of TA proteins in the cytosol. This complex then targets to the endoplasmic reticulum by membrane-bound receptors GET1 and GET2, where the tail-anchored protein is released for insertion. This process is regulated by ATP binding and hydrolysis. ATP binding drives the homodimer towards the closed dimer state, facilitating recognition of newly synthesized TA membrane proteins. ATP hydrolysis is required for insertion. Subsequently, the homodimer reverts towards the open dimer state, lowering its affinity for the GET1-GET2 receptor, and returning it to the cytosol to initiate a new round of targeting. Cooperates with the HDEL receptor ERD2 to mediate the ATP-dependent retrieval of resident ER proteins that contain a C-terminal H-D-E-L retention signal from the Golgi to the ER. Involved in low-level resistance to the oxyanions arsenite and arsenate, and in heat tolerance. The polypeptide is ATPase GET3 (Debaryomyces hansenii (strain ATCC 36239 / CBS 767 / BCRC 21394 / JCM 1990 / NBRC 0083 / IGC 2968) (Yeast)).